Here is a 137-residue protein sequence, read N- to C-terminus: MKVSPRRRARECAVQALYSWYISQNSIEEVELAFVTDQDMKGVDLPYFRKLLRGTALYVEAIDHDIRPYLDRMENDVDPIERTILRLATYELKYELDVPYKVVINEGIEVAKVFGSDDSHKYINGILDKLAPALGRK.

This sequence belongs to the NusB family.

Involved in transcription antitermination. Required for transcription of ribosomal RNA (rRNA) genes. Binds specifically to the boxA antiterminator sequence of the ribosomal RNA (rrn) operons. This is Transcription antitermination protein NusB from Haemophilus ducreyi (strain 35000HP / ATCC 700724).